A 906-amino-acid polypeptide reads, in one-letter code: Protein translocase subunit SecA (906 aa).

Residues Gln87, 105 to 109 (GEGKT), and Asp507 contribute to the ATP site. Over residues 553–563 (RHESRRIDNQL) the composition is skewed to basic and acidic residues. Disordered stretches follow at residues 553-576 (RHES…PGSS) and 854-906 (LEEP…GRLA). Cys890, Cys892, Cys901, and His902 together coordinate Zn(2+). Basic residues predominate over residues 896–906 (KKYKQCHGRLA).

It belongs to the SecA family. Monomer and homodimer. Part of the essential Sec protein translocation apparatus which comprises SecA, SecYEG and auxiliary proteins SecDF-YajC and YidC. It depends on Zn(2+) as a cofactor.

The protein localises to the cell inner membrane. It is found in the cytoplasm. The catalysed reaction is ATP + H2O + cellular proteinSide 1 = ADP + phosphate + cellular proteinSide 2.. In terms of biological role, part of the Sec protein translocase complex. Interacts with the SecYEG preprotein conducting channel. Has a central role in coupling the hydrolysis of ATP to the transfer of proteins into and across the cell membrane, serving both as a receptor for the preprotein-SecB complex and as an ATP-driven molecular motor driving the stepwise translocation of polypeptide chains across the membrane. The sequence is that of Protein translocase subunit SecA from Methylococcus capsulatus (strain ATCC 33009 / NCIMB 11132 / Bath).